We begin with the raw amino-acid sequence, 231 residues long: NADH-ubiquinone oxidoreductase chain 4 (231 aa).

6 helical membrane passes run 1–21 (PIAG…YGII), 34–54 (MFLP…LTCL), 63–85 (IAYS…TPWG), 89–111 (AMAL…NTTY), 128–148 (ILPM…ATPP), and 156–176 (LLIM…LGLS).

The protein belongs to the complex I subunit 4 family.

It is found in the mitochondrion membrane. The enzyme catalyses a ubiquinone + NADH + 5 H(+)(in) = a ubiquinol + NAD(+) + 4 H(+)(out). Core subunit of the mitochondrial membrane respiratory chain NADH dehydrogenase (Complex I) that is believed to belong to the minimal assembly required for catalysis. Complex I functions in the transfer of electrons from NADH to the respiratory chain. The immediate electron acceptor for the enzyme is believed to be ubiquinone. The chain is NADH-ubiquinone oxidoreductase chain 4 (MT-ND4) from Trimeresurus stejnegeri (Chinese green tree viper).